Reading from the N-terminus, the 206-residue chain is Type III pantothenate kinase (206 aa).

Position 5–12 (5–12 (DIGNSTAK)) interacts with ATP. Residues Y67 and 72–75 (GVDR) contribute to the substrate site. Residue D74 is the Proton acceptor of the active site. D89 lines the K(+) pocket. S92 contacts ATP. T144 provides a ligand contact to substrate.

It belongs to the type III pantothenate kinase family. As to quaternary structure, homodimer. The cofactor is NH4(+). Requires K(+) as cofactor.

It localises to the cytoplasm. The enzyme catalyses (R)-pantothenate + ATP = (R)-4'-phosphopantothenate + ADP + H(+). It participates in cofactor biosynthesis; coenzyme A biosynthesis; CoA from (R)-pantothenate: step 1/5. Functionally, catalyzes the phosphorylation of pantothenate (Pan), the first step in CoA biosynthesis. The chain is Type III pantothenate kinase from Campylobacter hominis (strain ATCC BAA-381 / DSM 21671 / CCUG 45161 / LMG 19568 / NCTC 13146 / CH001A).